Consider the following 691-residue polypeptide: Dipeptidyl peptidase 3 (691 aa).

H431 provides a ligand contact to Zn(2+). E432 is an active-site residue. Zn(2+) is bound by residues H436 and E492.

This sequence belongs to the peptidase M49 family. Requires Zn(2+) as cofactor.

The protein localises to the cytoplasm. It carries out the reaction Release of an N-terminal dipeptide from a peptide comprising four or more residues, with broad specificity. Also acts on dipeptidyl 2-naphthylamides.. In Dictyostelium discoideum (Social amoeba), this protein is Dipeptidyl peptidase 3 (dpp3-1).